A 656-amino-acid polypeptide reads, in one-letter code: Vacuolar amino acid transporter 3 (656 aa).

Positions 1–109 (MSNSQSIKIK…VPSTSEDPDV (109 aa)) are disordered. Positions 15 to 28 (NENFASGSYSSRRS) are enriched in polar residues. 2 positions are modified to phosphoserine: S37 and S53. Positions 50-71 (ISPSESNLPNNVAENTTDTPVN) are enriched in polar residues. The span at 75–97 (IRDENHNSRKGKDVTLNSDEAHS) shows a compositional bias: basic and acidic residues. Phosphoserine is present on S172. Transmembrane regions (helical) follow at residues 280–300 (AVLL…PKAF), 307–327 (FSSA…LLLI), 351–371 (FAIL…YISF), 389–409 (EYHL…LSLV), 419–439 (ALIA…WDVI), 457–477 (FSLF…ILPI), 494–514 (VMAA…AAFG), 537–557 (LYAI…IAII), 578–598 (YLRV…SSRL), 601–621 (FVSM…PPML), and 636–656 (DIFM…MTFF).

It belongs to the amino acid/polyamine transporter 2 family.

It is found in the endoplasmic reticulum membrane. The protein localises to the vacuole membrane. Its function is as follows. Involved in amino acid efflux from the vacuole to the cytoplasm. Capable of transporting large neutral amino acids including tyrosine, glutamine, asparagine, isoleucine and leucine. Required for spore formation. This chain is Vacuolar amino acid transporter 3 (avt3), found in Schizosaccharomyces pombe (strain 972 / ATCC 24843) (Fission yeast).